Reading from the N-terminus, the 318-residue chain is Pyrimidine-specific ribonucleoside hydrolase RihA (318 aa).

The active site involves His-240.

This sequence belongs to the IUNH family. RihA subfamily.

Functionally, hydrolyzes cytidine or uridine to ribose and cytosine or uracil, respectively. The sequence is that of Pyrimidine-specific ribonucleoside hydrolase RihA from Shewanella sp. (strain MR-4).